The sequence spans 915 residues: Metabotropic glutamate receptor 7 (915 aa).

An N-terminal signal peptide occupies residues 1-34 (MVQLGKLLRVLTLMKFPCCVLEVLLCVLAAAARG). Over 35–590 (QEMYAPHSIR…IIKLEWHSPW (556 aa)) the chain is Extracellular. Cysteines 67 and 109 form a disulfide. Residue Asn98 is glycosylated (N-linked (GlcNAc...) asparagine). L-glutamate is bound by residues Ser159, 180–182 (AST), Tyr230, and Asp314. 7 disulfide bridges follow: Cys249-Cys541, Cys374-Cys390, Cys430-Cys437, Cys523-Cys542, Cys527-Cys545, Cys548-Cys560, and Cys563-Cys576. Lys407 is an L-glutamate binding site. Asn458 and Asn486 each carry an N-linked (GlcNAc...) asparagine glycan. Asn572 carries an N-linked (GlcNAc...) asparagine glycan. The chain crosses the membrane as a helical span at residues 591–615 (AVIPVFLAMLGIIATIFVMATFIRY). Residues 616–627 (NDTPIVRASGRE) are Cytoplasmic-facing. Residues 628–648 (LSYVLLTGIFLCYIITFLMIA) form a helical membrane-spanning segment. The Extracellular portion of the chain corresponds to 649–654 (KPDVAV). A helical membrane pass occupies residues 655–675 (CSFRRVFLGLGMCISYAALLT). Residues 676–702 (KTNRIYRIFEQGKKSVTAPRLISPTSQ) lie on the Cytoplasmic side of the membrane. Residues 703–723 (LAITSSLISVQLLGVFIWFGV) traverse the membrane as a helical segment. Residues 724 to 753 (DPPNIIIDYDEHKTMNPEQARGVLKCDITD) lie on the Extracellular side of the membrane. The helical transmembrane segment at 754–775 (LQIICSLGYSILLMVTCTVYAI) threads the bilayer. The Cytoplasmic segment spans residues 776-788 (KTRGVPENFNEAK). Residues 789-810 (PIGFTMYTTCIVWLAFIPIFFG) traverse the membrane as a helical segment. At 811–825 (TAQSAEKLYIQTTTL) the chain is on the extracellular side. The chain crosses the membrane as a helical span at residues 826–850 (TISMNLSASVALGMLYMPKVYIIIF). At 851-915 (HPELNVQKRK…KYVSYNNLVI (65 aa)) the chain is on the cytoplasmic side. Residues 874–895 (SRLSHKPSDRPNGEAKTELCEN) form a disordered region. A compositionally biased stretch (basic and acidic residues) spans 879-892 (KPSDRPNGEAKTEL). A Phosphoserine modification is found at Ser900.

The protein belongs to the G-protein coupled receptor 3 family. In terms of assembly, homodimer. Interacts with PICK1. As to expression, widely distributed throughout the brain.

The protein localises to the cell membrane. In terms of biological role, G-protein coupled receptor activated by glutamate that regulates axon outgrowth through the MAPK-cAMP-PKA signaling pathway during neuronal development. Ligand binding causes a conformation change that triggers signaling via guanine nucleotide-binding proteins (G proteins) and modulates the activity of downstream effectors, such as adenylate cyclase that it inhibits. This chain is Metabotropic glutamate receptor 7 (Grm7), found in Rattus norvegicus (Rat).